The primary structure comprises 399 residues: S-adenosylmethionine synthase (399 aa).

Residue His15 coordinates ATP. Asp17 serves as a coordination point for Mg(2+). Residue Glu43 coordinates K(+). The L-methionine site is built by Glu56 and Gln99. Residues Gln99–His109 form a flexible loop region. ATP contacts are provided by residues Asp175–Lys177, Arg242–Phe243, Asp251, Arg257–Lys258, Ala274, and Lys278. Asp251 contributes to the L-methionine binding site. Lys282 is an L-methionine binding site.

It belongs to the AdoMet synthase family. As to quaternary structure, homotetramer; dimer of dimers. Mg(2+) serves as cofactor. Requires K(+) as cofactor.

The protein resides in the cytoplasm. It carries out the reaction L-methionine + ATP + H2O = S-adenosyl-L-methionine + phosphate + diphosphate. Its pathway is amino-acid biosynthesis; S-adenosyl-L-methionine biosynthesis; S-adenosyl-L-methionine from L-methionine: step 1/1. Catalyzes the formation of S-adenosylmethionine (AdoMet) from methionine and ATP. The overall synthetic reaction is composed of two sequential steps, AdoMet formation and the subsequent tripolyphosphate hydrolysis which occurs prior to release of AdoMet from the enzyme. The sequence is that of S-adenosylmethionine synthase from Lactobacillus helveticus (strain DPC 4571).